A 783-amino-acid polypeptide reads, in one-letter code: Galactinol--sucrose galactosyltransferase (783 aa).

It belongs to the glycosyl hydrolases 36 family.

The catalysed reaction is alpha-D-galactosyl-(1-&gt;3)-1D-myo-inositol + sucrose = raffinose + myo-inositol. Its activity is regulated as follows. Inhibited by Ag(2)+, Hg(2+), Zn(2+), p-chloromercuribenzoate (pCMB) and 1-deoxygalactonojirimycin. Functionally, transglycosidase operating by a ping-pong reaction mechanism. Involved in the synthesis of raffinose, a major soluble carbohydrate in seeds, roots and tubers. Specific for galactinol and p-nitrophenyl-alpha-D-galactoside as galactosyl donors. Able to utilize sucrose, lactose, 4-beta-galactobiose, N-acetyl-D-lactosamine, trehalose and lacto-N-biose as acceptors. May also act as a glycoside hydrolase. This is Galactinol--sucrose galactosyltransferase (RFS) from Oryza sativa subsp. japonica (Rice).